The sequence spans 62 residues: Large ribosomal subunit protein bL28 (62 aa).

The segment at 1–28 (MARKCVITGRKSRSGNSRSHAMNASKRT) is disordered. Residues 14–26 (SGNSRSHAMNASK) are compositionally biased toward polar residues.

Belongs to the bacterial ribosomal protein bL28 family.

This chain is Large ribosomal subunit protein bL28, found in Bacillus licheniformis (strain ATCC 14580 / DSM 13 / JCM 2505 / CCUG 7422 / NBRC 12200 / NCIMB 9375 / NCTC 10341 / NRRL NRS-1264 / Gibson 46).